Consider the following 237-residue polypeptide: uncharacterized protein (237 aa).

Residues 13–218 (VVGLSGGVAT…KSWKPYIFRV (206 aa)) form the DPCK domain. Position 18-25 (18-25 (GGVATGKS)) interacts with ATP.

The protein belongs to the CoaE family.

This is an uncharacterized protein from Caenorhabditis elegans.